A 510-amino-acid polypeptide reads, in one-letter code: Histidine ammonia-lyase (510 aa).

Positions 143–145 form a cross-link, 5-imidazolinone (Ala-Gly); sequence ASG. The residue at position 144 (S144) is a 2,3-didehydroalanine (Ser).

It belongs to the PAL/histidase family. In terms of processing, contains an active site 4-methylidene-imidazol-5-one (MIO), which is formed autocatalytically by cyclization and dehydration of residues Ala-Ser-Gly.

The protein localises to the cytoplasm. The enzyme catalyses L-histidine = trans-urocanate + NH4(+). It participates in amino-acid degradation; L-histidine degradation into L-glutamate; N-formimidoyl-L-glutamate from L-histidine: step 1/3. This is Histidine ammonia-lyase from Yersinia pestis.